A 432-amino-acid polypeptide reads, in one-letter code: Tyrosine-protein phosphatase non-receptor type 1 (432 aa).

Met-1 is subject to N-acetylmethionine. Positions 3–277 (MEKEFEEIDK…RFSYLAVIEG (275 aa)) constitute a Tyrosine-protein phosphatase domain. Tyr-20 carries the post-translational modification Phosphotyrosine. Ser-50 bears the Phosphoserine; by CLK1, CLK2 and PKB/AKT1 or PKB/AKT2 mark. Tyr-66 is modified (phosphotyrosine; by EGFR). Residues Asp-181 and 215-221 (CSAGIGR) contribute to the substrate site. The Phosphocysteine intermediate role is filled by Cys-215. Cys-215 bears the Cysteine persulfide mark. The residue at position 215 (Cys-215) is an S-nitrosocysteine; in reversibly inhibited form. Phosphoserine; by CLK1 and CLK2 is present on residues Ser-242 and Ser-243. Position 262 (Gln-262) interacts with substrate. Disordered regions lie at residues 297–322 (EDLDLPPEHVPPPPRPPKRTLEPHNG) and 335–399 (SEET…EEHK). A phosphoserine mark is found at Ser-335, Ser-362, and Ser-364. The span at 354–364 (SSAMHSVSSMS) shows a compositional bias: low complexity. Thr-367 carries the phosphothreonine modification.

The protein belongs to the protein-tyrosine phosphatase family. Non-receptor class 1 subfamily. Interacts with EPHA3 (phosphorylated); dephosphorylates EPHA3 and may regulate its trafficking and function. Interacts with MET. Interacts with NCK1. Post-translationally, ser-50 is the major site of phosphorylation as compared to Ser-242 and Ser-243. Activated by phosphorylation at Ser-50. In terms of processing, S-nitrosylation of Cys-215 inactivates the enzyme activity. Sulfhydration at Cys-215 following endoplasmic reticulum stress inactivates the enzyme activity, promoting EIF2AK3/PERK activity. As to expression, most abundant in testis. Also found in kidney, spleen, muscle, liver, heart and brain.

Its subcellular location is the endoplasmic reticulum membrane. The catalysed reaction is O-phospho-L-tyrosyl-[protein] + H2O = L-tyrosyl-[protein] + phosphate. Tyrosine-protein phosphatase which acts as a regulator of endoplasmic reticulum unfolded protein response. Mediates dephosphorylation of EIF2AK3/PERK; inactivating the protein kinase activity of EIF2AK3/PERK. May play an important role in CKII- and p60c-src-induced signal transduction cascades. May regulate the EFNA5-EPHA3 signaling pathway which modulates cell reorganization and cell-cell repulsion. May also regulate the hepatocyte growth factor receptor signaling pathway through dephosphorylation of MET. The polypeptide is Tyrosine-protein phosphatase non-receptor type 1 (Ptpn1) (Mus musculus (Mouse)).